The sequence spans 284 residues: Homeobox protein six1b (284 aa).

The homeobox DNA-binding region spans glycine 124 to glutamate 183. Residues glutamine 167–methionine 238 form a disordered region. Over residues aspartate 179 to serine 190 the composition is skewed to basic and acidic residues. 2 stretches are compositionally biased toward polar residues: residues glutamate 191–serine 204 and proline 226–methionine 238.

The protein belongs to the SIX/Sine oculis homeobox family. In terms of assembly, interacts with eya1.

It localises to the nucleus. Its subcellular location is the cytoplasm. In terms of biological role, transcription factor that is involved in the regulation of cell proliferation, apoptosis and embryonic development. Depending on context, functions as a transcriptional repressor or activator. Transcriptional activation is enhanced by eya1 (in vitro). Plays an important role in the development of the inner ear, where it promotes hair cell proliferation and inhibits proliferation of neural progenitor cells. Required for normal myogenesis. Plays a role in the development of fast muscle fibers throughout the body, as well as the development of craniofacial muscles. Required for normal expression of myod1 and myog during myogenesis. The polypeptide is Homeobox protein six1b (six1b) (Danio rerio (Zebrafish)).